A 151-amino-acid polypeptide reads, in one-letter code: Transcriptional repressor NrdR (151 aa).

A zinc finger spans residues 3-34 (CPYCAYGESKVVDSRSTEDGSSIRRRRECLKC). The 91-residue stretch at 49-139 (ILVIKKNMSR…VYRQFKDINT (91 aa)) folds into the ATP-cone domain.

It belongs to the NrdR family. The cofactor is Zn(2+).

Functionally, negatively regulates transcription of bacterial ribonucleotide reductase nrd genes and operons by binding to NrdR-boxes. This chain is Transcriptional repressor NrdR, found in Clostridium botulinum (strain 657 / Type Ba4).